A 286-amino-acid polypeptide reads, in one-letter code: Aminoglycoside N(3)-acetyltransferase III (286 aa).

The protein belongs to the antibiotic N-acetyltransferase family.

It catalyses the reaction a 2-deoxystreptamine antibiotic + acetyl-CoA = an N(3)-acetyl-2-deoxystreptamine antibiotic + CoA + H(+). Functionally, resistance to antibiotics containing the 2-deoxy-streptamine ring including gentamicin, kanamycin, tobramycin, neomycin and apramycin. The sequence is that of Aminoglycoside N(3)-acetyltransferase III (aacC2) from Acinetobacter baumannii.